The following is a 311-amino-acid chain: Porphobilinogen deaminase (311 aa).

C242 is subject to S-(dipyrrolylmethanemethyl)cysteine.

The protein belongs to the HMBS family. In terms of assembly, monomer. Dipyrromethane is required as a cofactor.

It carries out the reaction 4 porphobilinogen + H2O = hydroxymethylbilane + 4 NH4(+). Its pathway is porphyrin-containing compound metabolism; protoporphyrin-IX biosynthesis; coproporphyrinogen-III from 5-aminolevulinate: step 2/4. Functionally, tetrapolymerization of the monopyrrole PBG into the hydroxymethylbilane pre-uroporphyrinogen in several discrete steps. The protein is Porphobilinogen deaminase (hemC) of Neisseria meningitidis serogroup A / serotype 4A (strain DSM 15465 / Z2491).